We begin with the raw amino-acid sequence, 108 residues long: Small ribosomal subunit protein eS25y (108 aa).

Residues 1–36 (MAPKKDKVPPPSSKPAKSGGGKQKKKKWSKGKQKEK) are disordered. Over residues 22-31 (KQKKKKWSKG) the composition is skewed to basic residues.

It belongs to the eukaryotic ribosomal protein eS25 family.

The polypeptide is Small ribosomal subunit protein eS25y (RPS25B) (Arabidopsis thaliana (Mouse-ear cress)).